Consider the following 124-residue polypeptide: Small ribosomal subunit protein bS6 (124 aa).

The interval 96-124 (ETGPSPMMKEVQREEAKKAAAAQPTEAQA) is disordered. Low complexity predominate over residues 114–124 (AAAAQPTEAQA).

The protein belongs to the bacterial ribosomal protein bS6 family.

In terms of biological role, binds together with bS18 to 16S ribosomal RNA. This Burkholderia mallei (strain ATCC 23344) protein is Small ribosomal subunit protein bS6.